Here is a 430-residue protein sequence, read N- to C-terminus: Asparagine--tRNA ligase (430 aa).

Belongs to the class-II aminoacyl-tRNA synthetase family. Homodimer.

Its subcellular location is the cytoplasm. The enzyme catalyses tRNA(Asn) + L-asparagine + ATP = L-asparaginyl-tRNA(Asn) + AMP + diphosphate + H(+). This is Asparagine--tRNA ligase from Bacillus velezensis (strain DSM 23117 / BGSC 10A6 / LMG 26770 / FZB42) (Bacillus amyloliquefaciens subsp. plantarum).